Consider the following 278-residue polypeptide: MEPFGARLRRAMDERGPLCVGIDPHASLLAEWGLNDDVAGLERFSRTVVEAMADRVAVLKPQSAFFERFGSRGVAVLETTVQEARAAGALVVMDAKRGDIGSTMAAYAESFLHKDAPLFSDALTVSPYLGYGSLKPAVDLARESGAGLFVLALTSNPEGGEVQHAVRGDGRSVGATMLAHLAAENAGEEPLGSFGAVVGATLGDLSSYDLGINGPLLAPGIGAQGATPADLPRVFGAALRNVVPNVSRGVLRHGPDVTALRTAADRFAVEIRTAVTAS.

K96 serves as the catalytic Proton donor.

This sequence belongs to the OMP decarboxylase family. Type 2 subfamily.

The enzyme catalyses orotidine 5'-phosphate + H(+) = UMP + CO2. The protein operates within pyrimidine metabolism; UMP biosynthesis via de novo pathway; UMP from orotate: step 2/2. The polypeptide is Orotidine 5'-phosphate decarboxylase (pyrF) (Streptomyces coelicolor (strain ATCC BAA-471 / A3(2) / M145)).